A 390-amino-acid chain; its full sequence is Digeranylgeranylglycerophospholipid reductase (390 aa).

Residues Ala18, Glu37, Cys48, Ala49, Ala51, Arg98, Val122, Asp278, Gly290, and Ile291 each coordinate FAD. Residue Val368 participates in a 2,3-bis-O-(geranylgeranyl)-sn-glycerol 1-phospholipid binding.

Belongs to the geranylgeranyl reductase family. DGGGPL reductase subfamily. The cofactor is FAD.

The catalysed reaction is a 2,3-bis-O-phytanyl-sn-glycerol 1-phospholipid + 8 A = a 2,3-bis-O-(geranylgeranyl)-sn-glycerol 1-phospholipid + 8 AH2. It carries out the reaction 2,3-bis-O-(phytanyl)-sn-glycerol 1-phosphate + 8 A = 2,3-bis-O-(geranylgeranyl)-sn-glycerol 1-phosphate + 8 AH2. The enzyme catalyses CDP-2,3-bis-O-(geranylgeranyl)-sn-glycerol + 8 AH2 = CDP-2,3-bis-O-(phytanyl)-sn-glycerol + 8 A. It catalyses the reaction archaetidylserine + 8 AH2 = 2,3-bis-O-phytanyl-sn-glycero-3-phospho-L-serine + 8 A. It participates in membrane lipid metabolism; glycerophospholipid metabolism. In terms of biological role, is involved in the reduction of 2,3-digeranylgeranylglycerophospholipids (unsaturated archaeols) into 2,3-diphytanylglycerophospholipids (saturated archaeols) in the biosynthesis of archaeal membrane lipids. Catalyzes the formation of archaetidic acid (2,3-di-O-phytanyl-sn-glyceryl phosphate) from 2,3-di-O-geranylgeranylglyceryl phosphate (DGGGP) via the hydrogenation of each double bond of the isoprenoid chains. Is also probably able to reduce double bonds of geranyl groups in CDP-2,3-bis-O-(geranylgeranyl)-sn-glycerol and archaetidylserine, thus acting at various stages in the biosynthesis of archaeal membrane lipids. The chain is Digeranylgeranylglycerophospholipid reductase from Methanococcus maripaludis (strain C7 / ATCC BAA-1331).